Reading from the N-terminus, the 261-residue chain is 3-methyl-2-oxobutanoate hydroxymethyltransferase (261 aa).

Asp42 and Asp81 together coordinate Mg(2+). Residues 42 to 43, Asp81, and Lys110 contribute to the 3-methyl-2-oxobutanoate site; that span reads DS. Residue Glu112 participates in Mg(2+) binding. The Proton acceptor role is filled by Glu179.

Belongs to the PanB family. In terms of assembly, homodecamer; pentamer of dimers. Mg(2+) is required as a cofactor.

Its subcellular location is the cytoplasm. The enzyme catalyses 3-methyl-2-oxobutanoate + (6R)-5,10-methylene-5,6,7,8-tetrahydrofolate + H2O = 2-dehydropantoate + (6S)-5,6,7,8-tetrahydrofolate. It participates in cofactor biosynthesis; (R)-pantothenate biosynthesis; (R)-pantoate from 3-methyl-2-oxobutanoate: step 1/2. Catalyzes the reversible reaction in which hydroxymethyl group from 5,10-methylenetetrahydrofolate is transferred onto alpha-ketoisovalerate to form ketopantoate. This is 3-methyl-2-oxobutanoate hydroxymethyltransferase from Thermus thermophilus (strain ATCC BAA-163 / DSM 7039 / HB27).